A 425-amino-acid polypeptide reads, in one-letter code: Histidine--tRNA ligase (425 aa).

It belongs to the class-II aminoacyl-tRNA synthetase family. In terms of assembly, homodimer.

The protein resides in the cytoplasm. The enzyme catalyses tRNA(His) + L-histidine + ATP = L-histidyl-tRNA(His) + AMP + diphosphate + H(+). This chain is Histidine--tRNA ligase, found in Erwinia tasmaniensis (strain DSM 17950 / CFBP 7177 / CIP 109463 / NCPPB 4357 / Et1/99).